Here is a 208-residue protein sequence, read N- to C-terminus: Uridine kinase (208 aa).

Residue 12 to 19 (GGSGGGKT) coordinates ATP.

It belongs to the uridine kinase family.

The protein localises to the cytoplasm. It catalyses the reaction uridine + ATP = UMP + ADP + H(+). It carries out the reaction cytidine + ATP = CMP + ADP + H(+). It participates in pyrimidine metabolism; CTP biosynthesis via salvage pathway; CTP from cytidine: step 1/3. It functions in the pathway pyrimidine metabolism; UMP biosynthesis via salvage pathway; UMP from uridine: step 1/1. This is Uridine kinase from Streptococcus pyogenes serotype M18 (strain MGAS8232).